The sequence spans 221 residues: MRCNGMSPVSVAQRNTGIWAVVPLKAPECAKTRLSGVLSHAARQALFFSMASHVIGTLRASPRIASLLVVTPSESTAEMARAAGAEILWGPPDEGMANACSRAMAHIAAAGGERVMFVPGDLPLLDGAAIDMLSRAPVDAIGMAPNRDGHGTNGLICRPGAIPLFFSGPSFSAHQNAARCAGIDVWIVRSREWALDVDLPADLEEFESSIKDAKRRVLCQI.

The protein belongs to the CofC family.

It carries out the reaction (2R)-3-phosphoglycerate + GTP + H(+) = 3-[(R)-glyceryl]-diphospho-5'-guanosine + diphosphate. The catalysed reaction is (2S)-2-phospholactate + GTP + H(+) = (2S)-lactyl-2-diphospho-5'-guanosine + diphosphate. It functions in the pathway cofactor biosynthesis; coenzyme F420 biosynthesis. Functionally, guanylyltransferase that catalyzes the activation of (2R)-3-phosphoglycerate (3PG) as 3-[(R)-glyceryl]-diphospho-5'-guanosine, via the condensation of 3PG with GTP. It is involved in the biosynthesis of a derivative of the hydride carrier cofactor coenzyme F420, 3PG-F420. Can also use (2S)-2-phospholactate (2-PL), with lower turnover, and has weak activity with phosphoenolpyruvate (PEP). The sequence is that of 3-phospho-D-glycerate guanylyltransferase from Mycetohabitans rhizoxinica (strain DSM 19002 / CIP 109453 / HKI 454) (Paraburkholderia rhizoxinica).